The following is a 328-amino-acid chain: Biotin synthase (328 aa).

A Radical SAM core domain is found at 48-275; that stretch reads NRIQLSKLLN…KSHVRLTAGR (228 aa). 3 residues coordinate [4Fe-4S] cluster: cysteine 63, cysteine 67, and cysteine 70. Residues cysteine 107, cysteine 138, cysteine 198, and arginine 270 each contribute to the [2Fe-2S] cluster site.

This sequence belongs to the radical SAM superfamily. Biotin synthase family. As to quaternary structure, homodimer. [4Fe-4S] cluster is required as a cofactor. Requires [2Fe-2S] cluster as cofactor.

The enzyme catalyses (4R,5S)-dethiobiotin + (sulfur carrier)-SH + 2 reduced [2Fe-2S]-[ferredoxin] + 2 S-adenosyl-L-methionine = (sulfur carrier)-H + biotin + 2 5'-deoxyadenosine + 2 L-methionine + 2 oxidized [2Fe-2S]-[ferredoxin]. Its pathway is cofactor biosynthesis; biotin biosynthesis; biotin from 7,8-diaminononanoate: step 2/2. Functionally, catalyzes the conversion of dethiobiotin (DTB) to biotin by the insertion of a sulfur atom into dethiobiotin via a radical-based mechanism. The chain is Biotin synthase from Brucella abortus (strain S19).